A 323-amino-acid polypeptide reads, in one-letter code: tRNA (guanine(9)-N1)-methyltransferase (323 aa).

Residues 1 to 16 show a composition bias toward polar residues; it reads MTEQTSEATVVNNSPA. Disordered stretches follow at residues 1 to 34 and 192 to 215; these read MTEQ…EIEE and TGAP…NSTD. The span at 25-34 shows a compositional bias: basic and acidic residues; the sequence is EKPTPEEIEE. The SAM-dependent MTase TRM10-type domain occupies 99–319; it reads KAQPIPSRQI…KVLPPRKIKS (221 aa). Positions 204–215 are enriched in low complexity; sequence GNSNSNTTNSTD. Residues 225 to 226, Gly245, 249 to 253, Cys257, Leu271, and 283 to 285 contribute to the S-adenosyl-L-methionine site; these read LT, DKNRH, and HVL. The active-site Proton acceptor is the Asp249.

Belongs to the class IV-like SAM-binding methyltransferase superfamily. TRM10 family. In terms of assembly, monomer.

It is found in the cytoplasm. It localises to the nucleus. It carries out the reaction guanosine(9) in tRNA + S-adenosyl-L-methionine = N(1)-methylguanosine(9) in tRNA + S-adenosyl-L-homocysteine + H(+). S-adenosyl-L-methionine-dependent guanine N(1)-methyltransferase that catalyzes the formation of N(1)-methylguanine at position 9 (m1G9) in cytoplasmic tRNA. The protein is tRNA (guanine(9)-N1)-methyltransferase of Candida albicans (strain SC5314 / ATCC MYA-2876) (Yeast).